A 466-amino-acid polypeptide reads, in one-letter code: Delta-1 crystallin (466 aa).

Position 2 is a blocked amino end (Ala) (alanine 2).

Belongs to the lyase 1 family. Argininosuccinate lyase subfamily. Homotetramer. In terms of processing, the N-terminus is blocked. Eye lens.

Delta crystallin, the principal crystallin in embryonic lens, is found only in birds and reptiles. The sequence is that of Delta-1 crystallin (ASL1) from Gallus gallus (Chicken).